Here is a 674-residue protein sequence, read N- to C-terminus: Xaa-Pro aminopeptidase 2 (674 aa).

The N-terminal stretch at 1-21 is a signal peptide; the sequence is MARAHWGCCPWLVLLCACAWG. 3 N-linked (GlcNAc...) asparagine glycosylation sites follow: Asn-35, Asn-49, and Asn-65. Arg-116 is a binding site for substrate. Asn-278 and Asn-291 each carry an N-linked (GlcNAc...) asparagine glycan. Residue His-430 participates in substrate binding. Positions 450, 461, and 524 each coordinate Zn(2+). His-524, His-533, and Glu-555 together coordinate substrate. Residues Glu-555 and Glu-569 each coordinate Zn(2+). Ala-649 is lipidated: GPI-anchor amidated alanine. Positions 650-674 are cleaved as a propeptide — removed in mature form; sequence ARAPDTASWASVLVVSTLAILGWSV.

This sequence belongs to the peptidase M24B family. In terms of assembly, homotrimer. Zn(2+) serves as cofactor. Post-translationally, N-glycosylated. Expressed in kidney, lung, heart, placenta, liver, small intestine and colon. No expression in brain, skeletal muscle, pancreas, spleen, thymus, prostate, testis and ovary.

Its subcellular location is the cell membrane. It catalyses the reaction Release of any N-terminal amino acid, including proline, that is linked to proline, even from a dipeptide or tripeptide.. With respect to regulation, inhibited by apstatin and the chelating agent 1,10-phenanthroline. Also inhibited by high concentrations of Zn(2+). Not significantly inhibited by bestatin or phosphoramidon. In terms of biological role, membrane-bound metalloprotease which catalyzes the removal of a penultimate prolyl residue from the N-termini of peptides, such as Arg-Pro-Pro. May play a role in the metabolism of the vasodilator bradykinin. The sequence is that of Xaa-Pro aminopeptidase 2 (XPNPEP2) from Homo sapiens (Human).